We begin with the raw amino-acid sequence, 463 residues long: RuvB-like 2 (463 aa).

Residue Ala2 is modified to N-acetylalanine. A Glycyl lysine isopeptide (Lys-Gly) (interchain with G-Cter in SUMO2) cross-link involves residue Lys9. ATP is bound at residue 77–84 (GQPGTGKT). Residue Ser437 is modified to Phosphoserine. Glycyl lysine isopeptide (Lys-Gly) (interchain with G-Cter in SUMO2) cross-links involve residues Lys444 and Lys456.

This sequence belongs to the RuvB family. As to quaternary structure, forms homohexameric rings. Can form a dodecamer with RUVBL1 made of two stacked hexameric rings; however, even though RUVBL1 and RUVBL2 are present in equimolar ratio, the oligomeric status of each hexamer is not known. Oligomerization may regulate binding to nucleic acids and conversely, binding to nucleic acids may affect the dodecameric assembly. Interaction of the complex with DHX34 results in conformational changes of the N-terminus of the RUVBL2 subunits, resulting in loss of nucleotide binding ability and ATP hydrolysis of the complex. Interacts with the transcriptional activation domain of MYC. Interacts with ATF2. Component of the RNA polymerase II holoenzyme complex. May also act to bridge the LEF1/TCF1-CTNNB1 complex and TBP. Component of the NuA4 histone acetyltransferase complex which contains the catalytic subunit KAT5/TIP60 and the subunits EP400, TRRAP/PAF400, BRD8/SMAP, EPC1, DMAP1/DNMAP1, RUVBL1/TIP49, RUVBL2, ING3, actin, ACTL6A/BAF53A, MORF4L1/MRG15, MORF4L2/MRGX, MRGBP, YEATS4/GAS41, VPS72/YL1 and MEAF6. The NuA4 complex interacts with MYC and the adenovirus E1A protein. RUVBL2 interacts with EP400. Component of a NuA4-related complex which contains EP400, TRRAP/PAF400, SRCAP, BRD8/SMAP, EPC1, DMAP1/DNMAP1, RUVBL1/TIP49, RUVBL2, actin, ACTL6A/BAF53A, VPS72 and YEATS4/GAS41. Interacts with NPAT. Component of the chromatin-remodeling INO80 complex; specifically part of a complex module associated with the helicase ATP-binding and the helicase C-terminal domain of INO80. Component of some MLL1/MLL complex, at least composed of the core components KMT2A/MLL1, ASH2L, HCFC1/HCF1, WDR5 and RBBP5, as well as the facultative components BACC1, CHD8, E2F6, HSP70, INO80C, KANSL1, LAS1L, MAX, MCRS1, MGA, MYST1/MOF, PELP1, PHF20, PRP31, RING2, RUVB1/TIP49A, RUVB2/TIP49B, SENP3, TAF1, TAF4, TAF6, TAF7, TAF9 and TEX10. Interacts with IGHMBP2. Interacts with TELO2. Interacts with HINT1. Component of a SWR1-like complex. Component of the R2TP complex composed at least of RUVBL1, RUVBL2, RPAP3 and PIHD1. Component of the PAQosome complex which is responsible for the biogenesis of several protein complexes and which consists of R2TP complex members RUVBL1, RUVBL2, RPAP3 and PIH1D1, URI complex members PFDN2, PFDN6, PDRG1, UXT and URI1 as well as ASDURF, POLR2E and DNAAF10/WDR92. Interacts with ITFG1. Interacts with ZMYND10. Interacts with WAC; WAC positively regulates MTOR activity by promoting the assembly of the TTT complex composed of TELO2, TTI1 and TTI2 and the RUVBL complex composed of RUVBL1 and RUVBL2 into the TTT-RUVBL complex which leads to the dimerization of the mTORC1 complex and its subsequent activation. Forms a complex with APPL1 and APPL2. Interacts with ZNHIT2 (via HIT-type zinc finger) in the presence of ATP or ADP; shows a stronger interaction in the presence of ADP. The RUVBL1/RUVBL2 complex interacts with ZNHIT1 (via HIT-type zinc finger), ZNHIT3 (via HIT-type zinc finger), ZNHIT6 (via HIT-type zinc finger) and DDX59/ZNHIT5 (via HIT-type zinc finger) in the presence of ADP. Interacts with NOPCHAP1; the interaction is direct and disrupted upon ATP binding. Interacts with SMG1. (Microbial infection) Interacts with Mumps L polymerase; this interaction regulates the viral transcription. As to expression, ubiquitously expressed. Highly expressed in testis and thymus.

It is found in the nucleus matrix. Its subcellular location is the nucleus. The protein localises to the nucleoplasm. It localises to the cytoplasm. The protein resides in the membrane. It is found in the dynein axonemal particle. The catalysed reaction is ATP + H2O = ADP + phosphate + H(+). In terms of biological role, possesses single-stranded DNA-stimulated ATPase and ATP-dependent DNA helicase (5' to 3') activity; hexamerization is thought to be critical for ATP hydrolysis and adjacent subunits in the ring-like structure contribute to the ATPase activity. Component of the NuA4 histone acetyltransferase complex which is involved in transcriptional activation of select genes principally by acetylation of nucleosomal histones H4 and H2A. This modification may both alter nucleosome -DNA interactions and promote interaction of the modified histones with other proteins which positively regulate transcription. This complex may be required for the activation of transcriptional programs associated with oncogene and proto-oncogene mediated growth induction, tumor suppressor mediated growth arrest and replicative senescence, apoptosis, and DNA repair. The NuA4 complex ATPase and helicase activities seem to be, at least in part, contributed by the association of RUVBL1 and RUVBL2 with EP400. NuA4 may also play a direct role in DNA repair when recruited to sites of DNA damage. Component of a SWR1-like complex that specifically mediates the removal of histone H2A.Z/H2AZ1 from the nucleosome. Proposed core component of the chromatin remodeling INO80 complex which exhibits DNA- and nucleosome-activated ATPase activity and catalyzes ATP-dependent nucleosome sliding. Plays an essential role in oncogenic transformation by MYC and also modulates transcriptional activation by the LEF1/TCF1-CTNNB1 complex. May also inhibit the transcriptional activity of ATF2. Involved in the endoplasmic reticulum (ER)-associated degradation (ERAD) pathway where it negatively regulates expression of ER stress response genes. May play a role in regulating the composition of the U5 snRNP complex. The chain is RuvB-like 2 (RUVBL2) from Homo sapiens (Human).